The chain runs to 450 residues: Glucose-6-phosphate isomerase (450 aa).

Thr38 bears the Phosphothreonine mark. The active-site Proton donor is Glu290. Catalysis depends on residues His311 and Lys425.

Belongs to the GPI family.

Its subcellular location is the cytoplasm. The catalysed reaction is alpha-D-glucose 6-phosphate = beta-D-fructose 6-phosphate. It functions in the pathway carbohydrate biosynthesis; gluconeogenesis. The protein operates within carbohydrate degradation; glycolysis; D-glyceraldehyde 3-phosphate and glycerone phosphate from D-glucose: step 2/4. In terms of biological role, catalyzes the reversible isomerization of glucose-6-phosphate to fructose-6-phosphate. This chain is Glucose-6-phosphate isomerase, found in Bacillus licheniformis (strain ATCC 14580 / DSM 13 / JCM 2505 / CCUG 7422 / NBRC 12200 / NCIMB 9375 / NCTC 10341 / NRRL NRS-1264 / Gibson 46).